Reading from the N-terminus, the 189-residue chain is Elongation factor P (189 aa).

The protein belongs to the elongation factor P family.

It is found in the cytoplasm. Its pathway is protein biosynthesis; polypeptide chain elongation. In terms of biological role, involved in peptide bond synthesis. Stimulates efficient translation and peptide-bond synthesis on native or reconstituted 70S ribosomes in vitro. Probably functions indirectly by altering the affinity of the ribosome for aminoacyl-tRNA, thus increasing their reactivity as acceptors for peptidyl transferase. This is Elongation factor P from Sinorhizobium medicae (strain WSM419) (Ensifer medicae).